The following is a 180-amino-acid chain: UPF0690 protein C1orf52 homolog (180 aa).

Disordered regions lie at residues 1-66 (MAAE…SVTR) and 96-180 (KIWK…KKKK). Residues 48–61 (KQAEKRLPGPDELF) are compositionally biased toward basic and acidic residues. Thr-65 is subject to Phosphothreonine. Tyr-130 is modified (phosphotyrosine). Over residues 149–160 (EGEETVESDDDK) the composition is skewed to acidic residues. Position 156 is a phosphoserine (Ser-156). The segment covering 161 to 180 (DERASKIRRVEPGEAAKKKK) has biased composition (basic and acidic residues).

The protein belongs to the UPF0690 family.

The sequence is that of UPF0690 protein C1orf52 homolog from Mus musculus (Mouse).